Here is a 558-residue protein sequence, read N- to C-terminus: NAD(P)H-quinone oxidoreductase chain 4 (558 aa).

A run of 14 helical transmembrane segments spans residues 25–45, 56–76, 111–131, 133–153, 157–177, 189–209, 230–250, 264–284, 298–318, 327–347, 353–373, 395–417, 438–458, and 485–505; these read FPWLSLSILFPIFGSLVVPFI, WYALGIALVTFLITVGAYLKG, LILLTSFITALAVLAAWPVSF, PKLFFFLILAMDGGQIAVFAV, LLFFLAWELELLPVYLLLAIW, FIIYTAGSSLFILLAALAMGF, GFQLLCYGGLLIAFGVKLPVV, TAPVHMLLAGILLKMGGYALL, FAPLLIVLGVVNIIYAALTSF, IAYSSISHMGFVLIGIGSFSS, AMLQMVSHGLIGASLFFLVGA, IMFALWTTCSLASLALPGMSGFV, IVIAGLAAIGVILTPIYLLSM, and IYVIGSLLVPIIGIGLYPRIM.

The protein belongs to the complex I subunit 4 family.

It localises to the cellular thylakoid membrane. It catalyses the reaction a plastoquinone + NADH + (n+1) H(+)(in) = a plastoquinol + NAD(+) + n H(+)(out). The catalysed reaction is a plastoquinone + NADPH + (n+1) H(+)(in) = a plastoquinol + NADP(+) + n H(+)(out). Functionally, NDH-1 shuttles electrons from NAD(P)H, via FMN and iron-sulfur (Fe-S) centers, to quinones in the respiratory chain. The immediate electron acceptor for the enzyme in this species is believed to be plastoquinone. Couples the redox reaction to proton translocation (for every two electrons transferred, four hydrogen ions are translocated across the cytoplasmic membrane), and thus conserves the redox energy in a proton gradient. The chain is NAD(P)H-quinone oxidoreductase chain 4 from Prochlorococcus marinus (strain MIT 9211).